The chain runs to 629 residues: uncharacterized protein (629 aa).

The ABC transporter 1 domain maps to 4-255 (LKAENLYKTY…KRAEREAQAE (252 aa)). 36-43 (GPNGTGKS) provides a ligand contact to ATP. The segment at 284–304 (KARIDRVETLKEQTGPQSSGS) is disordered. Residues 285-294 (ARIDRVETLK) are compositionally biased toward basic and acidic residues. Polar residues predominate over residues 295–304 (EQTGPQSSGS). An ABC transporter 2 domain is found at 319-537 (IEAENVMIAY…EESKAKKAAP (219 aa)). 351–358 (GPNGIGKT) serves as a coordination point for ATP. Positions 530-555 (SKAKKAAPKPAAEEKTAEAEPKKKRK) are disordered. A compositionally biased stretch (basic and acidic residues) spans 540 to 550 (AAEEKTAEAEP). Residues 560–629 (KDQLEWDGIE…LSLMIEELES (70 aa)) adopt a coiled-coil conformation.

This sequence belongs to the ABC transporter superfamily.

This is an uncharacterized protein from Bacillus subtilis (strain 168).